The chain runs to 467 residues: Peroxisome proliferator-activated receptor alpha (467 aa).

A DNA-binding region (nuclear receptor) is located at residues 99–173; sequence NIECRICGDK…VGMSHNAIRF (75 aa). NR C4-type zinc fingers lie at residues 102–122 and 139–161; these read CRIC…CEGC and CDRS…FHKC. Residues 239–466 enclose the NR LBD domain; the sequence is FVIHDMETLC…PLLQEIYRDM (228 aa). Positions 304–433 are required for heterodimerization with RXRA; it reads DQVTLLKYGV…PKLLQKLADL (130 aa).

This sequence belongs to the nuclear hormone receptor family. NR1 subfamily. As to quaternary structure, heterodimer; with RXRA. This heterodimerization is required for DNA binding and transactivation activity. Interacts with NCOA3 coactivator. Interacts with CITED2; the interaction stimulates its transcriptional activity. Also interacts with PPARBP in vitro. Interacts with AKAP13, LPIN1, PRDM16 and coactivator NCOA6. Interacts with ASXL1 and ASXL2. Interacts with PER2. Interacts with SIRT1; the interaction seems to be modulated by NAD(+) levels. Interacts with CRY1 and CRY2. In hepatocytes, interacts with PAQR3 and HUWE1; the interactions promote PPARA poylubiquitination and HUWE1-mediated degradation. Ubiquitinated by E3 ubiquitin-protein ligase HUWE1; leading to proteasomal degradation. In terms of processing, phosphorylated.

It is found in the nucleus. Ligand-activated transcription factor. Key regulator of lipid metabolism. Activated by the endogenous ligand 1-palmitoyl-2-oleoyl-sn-glycerol-3-phosphocholine (16:0/18:1-GPC). Activated by oleylethanolamide, a naturally occurring lipid that regulates satiety. Receptor for peroxisome proliferators such as hypolipidemic drugs and fatty acids. Regulates the peroxisomal beta-oxidation pathway of fatty acids. Functions as a transcription activator for the ACOX1 and P450 genes. Transactivation activity requires heterodimerization with RXRA and is antagonized by NR2C2. May be required for the propagation of clock information to metabolic pathways regulated by PER2. This Cavia porcellus (Guinea pig) protein is Peroxisome proliferator-activated receptor alpha (PPARA).